Reading from the N-terminus, the 190-residue chain is Interferon alpha-11 (190 aa).

The first 23 residues, 1–23, serve as a signal peptide directing secretion; the sequence is MARLCAFLMILIVMSYWSTCSLG. Cystine bridges form between Cys-24/Cys-122 and Cys-52/Cys-162. N-linked (GlcNAc...) asparagine glycosylation is present at Asn-101.

This sequence belongs to the alpha/beta interferon family. Post-translationally, N-glycosylated.

The protein resides in the secreted. In terms of biological role, has antiviral and antiproliferative activities. Produced by macrophages and stimulates the production of two enzymes: a protein kinase and an oligoadenylate synthetase. During viral infection, mediates antiviral effect, either directly by inducing interferon-stimulated genes, either indirectly through stimulation of natural killer cells enabling them to control viral replication. This Mus musculus (Mouse) protein is Interferon alpha-11 (Ifna11).